The following is a 250-amino-acid chain: Sugar fermentation stimulation protein homolog (250 aa).

It belongs to the SfsA family.

The protein is Sugar fermentation stimulation protein homolog of Synechococcus sp. (strain CC9311).